The sequence spans 233 residues: Homeobox protein Hox-D4a (233 aa).

The Antp-type hexapeptide signature appears at 124–129; the sequence is VYPWMK. A DNA-binding region (homeobox) is located at residues 145-204; it reads PKRSRTAYTRQQVLELEKEFHFNRYLTRRRRIEIAHTLCLSERQIKIWFQNRRMKWTKDH. A disordered region spans residues 203–233; the sequence is DHKLPNTKGRSAPASSHLQSIHKDQTDITSL. Basic and acidic residues predominate over residues 223-233; it reads IHKDQTDITSL.

It belongs to the Antp homeobox family. Deformed subfamily.

It localises to the nucleus. Its function is as follows. Sequence-specific transcription factor which is part of a developmental regulatory system that provides cells with specific positional identities on the anterior-posterior axis. This Takifugu rubripes (Japanese pufferfish) protein is Homeobox protein Hox-D4a (hoxd4a).